Reading from the N-terminus, the 339-residue chain is Phenylalanine--tRNA ligase alpha subunit (339 aa).

Glutamate 253 contacts Mg(2+).

This sequence belongs to the class-II aminoacyl-tRNA synthetase family. Phe-tRNA synthetase alpha subunit type 1 subfamily. Tetramer of two alpha and two beta subunits. Requires Mg(2+) as cofactor.

The protein localises to the cytoplasm. It carries out the reaction tRNA(Phe) + L-phenylalanine + ATP = L-phenylalanyl-tRNA(Phe) + AMP + diphosphate + H(+). The protein is Phenylalanine--tRNA ligase alpha subunit of Ruthia magnifica subsp. Calyptogena magnifica.